Consider the following 695-residue polypeptide: Probable glucan endo-1,3-beta-glucosidase btgC (695 aa).

Disordered stretches follow at residues 1 to 53 (MSGP…THHG), 117 to 140 (RRGTDGQEANIPAERGYNTTGSDN), 175 to 258 (GPAG…RSQA), and 286 to 314 (ETSYDPVPGAGLEAGEKSQWVKPKPSTGS). The Cytoplasmic portion of the chain corresponds to 1–317 (MSGPHRTFSF…PKPSTGSRKR (317 aa)). Residues 36 to 45 (PISNMSSSPG) are compositionally biased toward polar residues. Residues 188–198 (HLGTSNSSQRN) are compositionally biased toward polar residues. The span at 231–241 (NPEEIADDGDD) shows a compositional bias: acidic residues. The chain crosses the membrane as a helical; Signal-anchor for type II membrane protein span at residues 318 to 338 (GWIIGAILAVIIIGAIVGGAV). Over 339-695 (GGTIGHKDSG…IPDCGGKTAA (357 aa)) the chain is Extracellular. Residues 346–372 (DSGDSASGSSASTQSASGDTDTNGDLD) are disordered. Residues 349 to 366 (DSASGSSASTQSASGDTD) are compositionally biased toward low complexity. N-linked (GlcNAc...) asparagine glycans are attached at residues N415, N438, and N466. Residue E498 is the Proton donor of the active site. E597 functions as the Nucleophile in the catalytic mechanism. N642 carries N-linked (GlcNAc...) asparagine glycosylation.

It belongs to the glycosyl hydrolase 17 family.

The protein resides in the cell membrane. It carries out the reaction Hydrolysis of (1-&gt;3)-beta-D-glucosidic linkages in (1-&gt;3)-beta-D-glucans.. Functionally, glucanases play a role in cell expansion during growth, in cell-cell fusion during mating, and in spore release during sporulation. This enzyme may be involved in beta-glucan degradation. Active on laminarin and lichenan. The sequence is that of Probable glucan endo-1,3-beta-glucosidase btgC (btgC) from Aspergillus clavatus (strain ATCC 1007 / CBS 513.65 / DSM 816 / NCTC 3887 / NRRL 1 / QM 1276 / 107).